Reading from the N-terminus, the 235-residue chain is tRNA (guanine-N(1)-)-methyltransferase (235 aa).

S-adenosyl-L-methionine is bound by residues G112 and 131–136 (LGDFVL).

The protein belongs to the RNA methyltransferase TrmD family. As to quaternary structure, homodimer.

It localises to the cytoplasm. It catalyses the reaction guanosine(37) in tRNA + S-adenosyl-L-methionine = N(1)-methylguanosine(37) in tRNA + S-adenosyl-L-homocysteine + H(+). Specifically methylates guanosine-37 in various tRNAs. This Synechococcus elongatus (strain ATCC 33912 / PCC 7942 / FACHB-805) (Anacystis nidulans R2) protein is tRNA (guanine-N(1)-)-methyltransferase.